A 313-amino-acid chain; its full sequence is Porphobilinogen deaminase (313 aa).

Cysteine 242 bears the S-(dipyrrolylmethanemethyl)cysteine mark.

Belongs to the HMBS family. In terms of assembly, monomer. Requires dipyrromethane as cofactor.

The catalysed reaction is 4 porphobilinogen + H2O = hydroxymethylbilane + 4 NH4(+). It participates in porphyrin-containing compound metabolism; protoporphyrin-IX biosynthesis; coproporphyrinogen-III from 5-aminolevulinate: step 2/4. Its function is as follows. Tetrapolymerization of the monopyrrole PBG into the hydroxymethylbilane pre-uroporphyrinogen in several discrete steps. This chain is Porphobilinogen deaminase (hemC), found in Proteus mirabilis.